A 23-amino-acid chain; its full sequence is Testis ecdysiotropin peptide B (23 aa).

In terms of biological role, stimulates synthesis of ecdysteroid in the testes of larvae and pupae. The chain is Testis ecdysiotropin peptide B from Lymantria dispar (Gypsy moth).